The chain runs to 447 residues: Phosphoglucosamine mutase (447 aa).

The active-site Phosphoserine intermediate is Ser-88. Residues Ser-88, Asp-231, Asp-233, and Asp-235 each contribute to the Mg(2+) site. At Ser-88 the chain carries Phosphoserine.

This sequence belongs to the phosphohexose mutase family. Monomer. Also forms large aggregates. It depends on Mg(2+) as a cofactor. In terms of processing, activated by phosphorylation. Glucose-1,6-bisphosphate or fructose-1,6-bisphosphate can activate the enzyme in vitro. However, since glucose-1,6-bisphosphate is not believed to form in methanogens, the physiologically relevant activator might be a serine kinase protein.

The enzyme catalyses alpha-D-glucosamine 1-phosphate = D-glucosamine 6-phosphate. Its function is as follows. Catalyzes the conversion of glucosamine-6-phosphate to glucosamine-1-phosphate. Also catalyzes the isomerization of glucose-1-phosphate to glucose-6-phosphate, but at a 5-fold lower rate. In Methanococcus maripaludis (strain DSM 14266 / JCM 13030 / NBRC 101832 / S2 / LL), this protein is Phosphoglucosamine mutase (glmM).